We begin with the raw amino-acid sequence, 474 residues long: Zinc finger protein 230 (474 aa).

The 69-residue stretch at 8-76 folds into the KRAB domain; sequence VTFKDVAVFF…ETATQREGNS (69 aa). Positions 80–167 are KRNB; the sequence is TIAEAGPHED…PQQFHSGEKS (88 aa). 9 consecutive C2H2-type zinc fingers follow at residues 168–190, 196–218, 224–246, 252–274, 280–302, 308–330, 336–358, 364–386, and 392–414; these read HTCN…QRVH, SKCD…ERVH, FKCE…CKLH, YICE…QIIH, FKCE…CMVH, YKSE…QIIH, YNCK…QRIH, YRCE…QRVH, and YNCK…KKLH. The C2H2-type 10; atypical zinc-finger motif lies at 420–442; that stretch reads FKCEDCGKRLVHRSFCKDQQGDH.

This sequence belongs to the krueppel C2H2-type zinc-finger protein family.

The protein localises to the nucleus. Its function is as follows. May be involved in transcriptional regulation. This chain is Zinc finger protein 230 (ZNF230), found in Homo sapiens (Human).